A 207-amino-acid chain; its full sequence is Small ribosomal subunit protein uS3 (207 aa).

Positions 17-86 (IDEYLEKELR…NPQIEVEEIK (70 aa)) constitute a KH type-2 domain.

The protein belongs to the universal ribosomal protein uS3 family. Part of the 30S ribosomal subunit.

In terms of biological role, binds the lower part of the 30S subunit head. The sequence is that of Small ribosomal subunit protein uS3 from Thermococcus sibiricus (strain DSM 12597 / MM 739).